Consider the following 308-residue polypeptide: MTTLVHDEHPGLTHLQRLEADSIQIIREAVAESERPVMLYSIGKDSSVLLHLARKAFRPSRLPFPLLHVDTTWKFRAMYAFRDAVAAEPDLDLIVHRNPDCVAQGINPFDHGSALHTQMWKTEGLKQALDQHGFDLAFGGARRDEEKSRAKERVFSIRSAQHRWDPKRQRPELWRLYNASKRPGESVRVFPLSNWTELDIWQYIHREAIPLVPLYFAALRPVVERDGTLIMVDDDRMRLDPGEVPQERMVRFRTLGCYPLSGAIPSTATTVPEVVQEMLLTTSSERQGRIIDHDGSASMEKKKQEGYF.

Residues R286–F308 form a disordered region.

The protein belongs to the PAPS reductase family. CysD subfamily. In terms of assembly, heterodimer composed of CysD, the smaller subunit, and CysN.

The catalysed reaction is sulfate + ATP + H(+) = adenosine 5'-phosphosulfate + diphosphate. It participates in sulfur metabolism; hydrogen sulfide biosynthesis; sulfite from sulfate: step 1/3. Its function is as follows. With CysN forms the ATP sulfurylase (ATPS) that catalyzes the adenylation of sulfate producing adenosine 5'-phosphosulfate (APS) and diphosphate, the first enzymatic step in sulfur assimilation pathway. APS synthesis involves the formation of a high-energy phosphoric-sulfuric acid anhydride bond driven by GTP hydrolysis by CysN coupled to ATP hydrolysis by CysD. The polypeptide is Sulfate adenylyltransferase subunit 2 (Nocardia farcinica (strain IFM 10152)).